A 345-amino-acid polypeptide reads, in one-letter code: Myb/SANT-like DNA-binding domain-containing protein 4 (345 aa).

The Myb-like domain occupies L4–R77. K9 participates in a covalent cross-link: Glycyl lysine isopeptide (Lys-Gly) (interchain with G-Cter in SUMO2). S106 is subject to Phosphoserine. Residues K114 and K142 each participate in a glycyl lysine isopeptide (Lys-Gly) (interchain with G-Cter in SUMO2) cross-link. The interval V141–N175 is disordered. Residue T188 is modified to Phosphothreonine. Residues H202 to L344 are a coiled coil. Residues K237, K254, and K273 each participate in a glycyl lysine isopeptide (Lys-Gly) (interchain with G-Cter in SUMO2) cross-link.

The chain is Myb/SANT-like DNA-binding domain-containing protein 4 (Msantd4) from Rattus norvegicus (Rat).